The sequence spans 451 residues: Velvet complex subunit 2 (451 aa).

Disordered stretches follow at residues 1–95, 205–312, and 426–451; these read MNTT…PRSI, PGQS…QTNP, and PIRK…DDDY. 3 stretches are compositionally biased toward polar residues: residues 18 to 28, 40 to 62, and 205 to 217; these read TMPSLHDTTYR, MPQT…NSLP, and PGQS…SPTY. In terms of domain architecture, Velvet spans 92-428; it reads PRSITVDGRK…ATQGIKIPIR (337 aa). The span at 267–283 shows a compositional bias: low complexity; it reads PQQSNYYYPQPSQSIPS. Residues 427–445 show a composition bias toward basic and acidic residues; the sequence is IRKDGKDGPGKGGKDGSRG.

This sequence belongs to the velvet family. VelB subfamily. Component of the heterotrimeric velvet complex composed of LAE1, VEL1 and VEL2; VEL1 acting as a bridging protein between LAE1 and VEL2. Forms a heterodimeric complex with VOS1; the formation of the VEL2-VOS1 complex is light-dependent.

The protein localises to the nucleus. It localises to the cytoplasm. In terms of biological role, component of the velvet transcription factor complex that controls sexual/asexual developmental ratio in response to light, promoting sexual development in the darkness while stimulating asexual sporulation under illumination. The velvet complex acts as a global regulator for secondary metabolite gene expression. Component of the VEL2-VOS1 heterodimeric complex that plays a dual role in activating genes associated with spore maturation and repressing certain development-associated genes. The VEL2-VOS1 complex binds DNA through the DNA-binding domain of VOS1 that recognizes an 11-nucleotide consensus sequence 5'-CTGGCCGCGGC-3' consisting of two motifs in the promoters of key developmental regulatory genes. Controls the expression of the oxalic acid and melanin gene clusters. Involved in the resistance to oxidative stress. Required for full virulence. The sequence is that of Velvet complex subunit 2 from Botryotinia fuckeliana (strain B05.10) (Noble rot fungus).